We begin with the raw amino-acid sequence, 467 residues long: Chromosomal replication initiator protein DnaA (467 aa).

The interval 1–90 is domain I, interacts with DnaA modulators; that stretch reads MSLSLWQQCL…KPVTQTPQAA (90 aa). The interval 91–130 is domain II; that stretch reads VTSNVAAPAQVAQTQPQRAAPSTRSGWDNVPAPAEPTYRS. A compositionally biased stretch (low complexity) spans 98–111; it reads PAQVAQTQPQRAAP. The tract at residues 98 to 119 is disordered; the sequence is PAQVAQTQPQRAAPSTRSGWDN. The segment at 131–347 is domain III, AAA+ region; that stretch reads NVNVKHTFDN…GALNRVIANA (217 aa). Residues Gly175, Gly177, Lys178, and Thr179 each coordinate ATP. Residues 348–467 form a domain IV, binds dsDNA region; sequence NFTGRAITID…FSNLIRTLSS (120 aa).

It belongs to the DnaA family. Oligomerizes as a right-handed, spiral filament on DNA at oriC.

The protein resides in the cytoplasm. Functionally, plays an essential role in the initiation and regulation of chromosomal replication. ATP-DnaA binds to the origin of replication (oriC) to initiate formation of the DNA replication initiation complex once per cell cycle. Binds the DnaA box (a 9 base pair repeat at the origin) and separates the double-stranded (ds)DNA. Forms a right-handed helical filament on oriC DNA; dsDNA binds to the exterior of the filament while single-stranded (ss)DNA is stabiized in the filament's interior. The ATP-DnaA-oriC complex binds and stabilizes one strand of the AT-rich DNA unwinding element (DUE), permitting loading of DNA polymerase. After initiation quickly degrades to an ADP-DnaA complex that is not apt for DNA replication. Binds acidic phospholipids. The protein is Chromosomal replication initiator protein DnaA of Shigella boydii serotype 4 (strain Sb227).